Consider the following 395-residue polypeptide: Multiple organellar RNA editing factor 8, chloroplastic/mitochondrial (395 aa).

The N-terminal 56 residues, 1–56, are a transit peptide targeting the chloroplast and mitochondrion; that stretch reads MATHTISRSILCRPAKSLSFLFTRSFASSAPLAKSPASSLLSRSRPLVAAFSSVFR. The span at 211-236 shows a compositional bias: basic and acidic residues; that stretch reads ANERNRRNDRPRNNDRSRNFERRREN. The tract at residues 211–395 is disordered; that stretch reads ANERNRRNDR…RDGSGNPYQG (185 aa). The span at 240–300 shows a compositional bias: pro residues; that stretch reads GPPPQRPPMG…GPRHPPPYGA (61 aa). The segment covering 313–334 has biased composition (low complexity); that stretch reads QNYGGTPPPNYGGAPPANNMGG. Residues 335–355 are compositionally biased toward pro residues; sequence APPPNYGGGPPPQYGAVPPPQ. A compositionally biased stretch (low complexity) spans 356-385; that stretch reads YGGAPPQNNNYQQQGSGMQQPQYQNNYPPN.

Belongs to the MORF family. As to quaternary structure, interacts with protoporphyrinogen oxidase 1 PPOX1. Interacts with PCMP-H52/MEF10. Homodimer and heterodimers with MORF1/RIP8, MORF2/RIP2, MORF3/RIP3, MORF4/RIP4, MORF5/RIP5, MORF6/RIP6 and MORF7/RIP7. Interacts with RBG3/ORRM3. Interacts with PCMP-A2/PMD1. Interacts with ORRM1 and VAT3/OZ1. Interacts with PCMP-H13/MEF35. Interacts with RBG5/ORRM4. Interacts with ORRM6.

It localises to the mitochondrion. The protein localises to the plastid. Its subcellular location is the chloroplast. Its function is as follows. Involved in organellar RNA editing. Required for the processing of numerous RNA editing sites in mitochondria and plastids. Binds to the plastid RARE1 factor, a pentatricopeptide repeat-containing protein involved in RNA editing. In Arabidopsis thaliana (Mouse-ear cress), this protein is Multiple organellar RNA editing factor 8, chloroplastic/mitochondrial.